Here is a 152-residue protein sequence, read N- to C-terminus: Small ribosomal subunit protein uS19z (152 aa).

Belongs to the universal ribosomal protein uS19 family.

The protein resides in the cytoplasm. This is Small ribosomal subunit protein uS19z (RPS15B) from Arabidopsis thaliana (Mouse-ear cress).